The sequence spans 491 residues: Argininosuccinate lyase (491 aa).

This sequence belongs to the lyase 1 family. Argininosuccinate lyase subfamily.

The protein localises to the cytoplasm. It carries out the reaction 2-(N(omega)-L-arginino)succinate = fumarate + L-arginine. It functions in the pathway amino-acid biosynthesis; L-arginine biosynthesis; L-arginine from L-ornithine and carbamoyl phosphate: step 3/3. This Methanosarcina barkeri (strain Fusaro / DSM 804) protein is Argininosuccinate lyase.